Here is a 497-residue protein sequence, read N- to C-terminus: Cytochrome P450 2D6 (497 aa).

Asp301 lines the substrate pocket. Heme is bound at residue Cys443.

It belongs to the cytochrome P450 family. Heme is required as a cofactor.

It is found in the endoplasmic reticulum membrane. The protein localises to the microsome membrane. The enzyme catalyses (5Z,8Z,11Z,14Z)-eicosatetraenoate + reduced [NADPH--hemoprotein reductase] + O2 = (8R,9S)-epoxy-(5Z,11Z,14Z)-eicosatrienoate + oxidized [NADPH--hemoprotein reductase] + H2O + H(+). It carries out the reaction (5Z,8Z,11Z,14Z)-eicosatetraenoate + reduced [NADPH--hemoprotein reductase] + O2 = (11R,12S)-epoxy-(5Z,8Z,14Z)-eicosatrienoate + oxidized [NADPH--hemoprotein reductase] + H2O + H(+). It catalyses the reaction (5Z,8Z,11Z,14Z)-eicosatetraenoate + reduced [NADPH--hemoprotein reductase] + O2 = (14S,15R)-epoxy-(5Z,8Z,11Z)-eicosatrienoate + oxidized [NADPH--hemoprotein reductase] + H2O + H(+). The catalysed reaction is N-(5Z,8Z,11Z,14Z-eicosatetraenoyl)-ethanolamine + reduced [NADPH--hemoprotein reductase] + O2 = N-(8,9-epoxy-5Z,11Z,14Z-eicosatrienoyl)-ethanolamine + oxidized [NADPH--hemoprotein reductase] + H2O + H(+). The enzyme catalyses N-(5Z,8Z,11Z,14Z-eicosatetraenoyl)-ethanolamine + reduced [NADPH--hemoprotein reductase] + O2 = N-(11,12-epoxy-5Z,8Z,14Z-eicosatrienoyl)-ethanolamine + oxidized [NADPH--hemoprotein reductase] + H2O + H(+). It carries out the reaction N-(5Z,8Z,11Z,14Z-eicosatetraenoyl)-ethanolamine + reduced [NADPH--hemoprotein reductase] + O2 = N-(14,15-epoxy-5Z,8Z,11Z-eicosatrienoyl)-ethanolamine + oxidized [NADPH--hemoprotein reductase] + H2O + H(+). It catalyses the reaction N-(5Z,8Z,11Z,14Z-eicosatetraenoyl)-ethanolamine + reduced [NADPH--hemoprotein reductase] + O2 = N-(20-hydroxy-5Z,8Z,11Z,14Z-eicosatetraenoyl)-ethanolamine + oxidized [NADPH--hemoprotein reductase] + H2O + H(+). The catalysed reaction is (5Z,8Z,11Z,14Z,17Z)-eicosapentaenoate + reduced [NADPH--hemoprotein reductase] + O2 = (17S,18R)-epoxy-(5Z,8Z,11Z,14Z)-eicosatetraenoate + oxidized [NADPH--hemoprotein reductase] + H2O + H(+). The enzyme catalyses (4Z,7Z,10Z,13Z,16Z,19Z)-docosahexaenoate + reduced [NADPH--hemoprotein reductase] + O2 = (19R,20S)-epoxy-(4Z,7Z,10Z,13Z,16Z)-docosapentaenoate + oxidized [NADPH--hemoprotein reductase] + H2O + H(+). It carries out the reaction (4Z,7Z,10Z,13Z,16Z,19Z)-docosahexaenoate + reduced [NADPH--hemoprotein reductase] + O2 = (19S,20R)-epoxy-(4Z,7Z,10Z,13Z,16Z)-docosapentaenoate + oxidized [NADPH--hemoprotein reductase] + H2O + H(+). It catalyses the reaction cholesterol + reduced [NADPH--hemoprotein reductase] + O2 = 25-hydroxycholesterol + oxidized [NADPH--hemoprotein reductase] + H2O + H(+). The catalysed reaction is all-trans-retinol + reduced [NADPH--hemoprotein reductase] + O2 = all-trans-retinal + oxidized [NADPH--hemoprotein reductase] + 2 H2O + H(+). The protein operates within cofactor metabolism; retinol metabolism. Its pathway is lipid metabolism; fatty acid metabolism. It participates in steroid metabolism; cholesterol metabolism. Its function is as follows. A cytochrome P450 monooxygenase involved in the metabolism of fatty acids, steroids and retinoids. Mechanistically, uses molecular oxygen inserting one oxygen atom into a substrate, and reducing the second into a water molecule, with two electrons provided by NADPH via cytochrome P450 reductase (NADPH--hemoprotein reductase). Catalyzes the epoxidation of double bonds of polyunsaturated fatty acids (PUFA). Metabolizes endocannabinoid arachidonoylethanolamide (anandamide) to 20-hydroxyeicosatetraenoic acid ethanolamide (20-HETE-EA) and 8,9-, 11,12-, and 14,15-epoxyeicosatrienoic acid ethanolamides (EpETrE-EAs), potentially modulating endocannabinoid system signaling. Catalyzes the hydroxylation of carbon-hydrogen bonds. Metabolizes cholesterol toward 25-hydroxycholesterol, a physiological regulator of cellular cholesterol homeostasis. Catalyzes the oxidative transformations of all-trans retinol to all-trans retinal, a precursor for the active form all-trans-retinoic acid. Also involved in the oxidative metabolism of drugs such as antiarrhythmics, adrenoceptor antagonists, and tricyclic antidepressants. The protein is Cytochrome P450 2D6 (CYP2D6) of Pan paniscus (Pygmy chimpanzee).